A 164-amino-acid polypeptide reads, in one-letter code: Transcriptional regulator MraZ (164 aa).

2 consecutive SpoVT-AbrB domains span residues 7–60 and 83–126; these read HFTN…EIDE and SEIL…EPGR. The tract at residues 141–164 is disordered; it reads LRKQLSSRPVAPDAQPPRPHGARE. Pro residues predominate over residues 154-164; sequence AQPPRPHGARE.

The protein belongs to the MraZ family. In terms of assembly, forms oligomers.

Its subcellular location is the cytoplasm. The protein resides in the nucleoid. In Beijerinckia indica subsp. indica (strain ATCC 9039 / DSM 1715 / NCIMB 8712), this protein is Transcriptional regulator MraZ.